The chain runs to 380 residues: Erythronate-4-phosphate dehydrogenase (380 aa).

Ser45 and Thr66 together coordinate substrate. NAD(+) contacts are provided by Asp146 and Thr174. Residue Arg207 is part of the active site. Residue Asp231 coordinates NAD(+). Residue Glu236 is part of the active site. The active-site Proton donor is His253. Position 256 (Gly256) interacts with NAD(+). Position 257 (Tyr257) interacts with substrate.

The protein belongs to the D-isomer specific 2-hydroxyacid dehydrogenase family. PdxB subfamily. As to quaternary structure, homodimer.

The protein resides in the cytoplasm. The enzyme catalyses 4-phospho-D-erythronate + NAD(+) = (R)-3-hydroxy-2-oxo-4-phosphooxybutanoate + NADH + H(+). It functions in the pathway cofactor biosynthesis; pyridoxine 5'-phosphate biosynthesis; pyridoxine 5'-phosphate from D-erythrose 4-phosphate: step 2/5. Functionally, catalyzes the oxidation of erythronate-4-phosphate to 3-hydroxy-2-oxo-4-phosphonooxybutanoate. The polypeptide is Erythronate-4-phosphate dehydrogenase (Pseudomonas fluorescens (strain ATCC BAA-477 / NRRL B-23932 / Pf-5)).